Here is a 331-residue protein sequence, read N- to C-terminus: UPF0329 protein ECU01_0080/ECU01_1530/ECU02_1560/ECU04_0090/ECU08_0010/ECU08_2090 (331 aa).

Residues 305–320 (QRSEMEKRDREQDPER) are compositionally biased toward basic and acidic residues. The interval 305–331 (QRSEMEKRDREQDPERRRLRARRVGSL) is disordered. Over residues 321–331 (RRLRARRVGSL) the composition is skewed to basic residues.

This sequence belongs to the UPF0329 family.

The chain is UPF0329 protein ECU01_0080/ECU01_1530/ECU02_1560/ECU04_0090/ECU08_0010/ECU08_2090 from Encephalitozoon cuniculi (strain GB-M1) (Microsporidian parasite).